Consider the following 105-residue polypeptide: Large ribosomal subunit protein mL49 (105 aa).

The transit peptide at 1 to 15 (MRSSLKPVLSNLRFN) directs the protein to the mitochondrion.

This sequence belongs to the mitochondrion-specific ribosomal protein mL49 family. In terms of assembly, component of the mitochondrial large ribosomal subunit (mt-LSU). Mature yeast 74S mitochondrial ribosomes consist of a small (37S) and a large (54S) subunit. The 37S small subunit contains a 15S ribosomal RNA (15S mt-rRNA) and at least 32 different proteins. The 54S large subunit contains a 21S rRNA (21S mt-rRNA) and at least 45 different proteins.

It is found in the mitochondrion. Its function is as follows. Component of the mitochondrial ribosome (mitoribosome), a dedicated translation machinery responsible for the synthesis of mitochondrial genome-encoded proteins, including at least some of the essential transmembrane subunits of the mitochondrial respiratory chain. The mitoribosomes are attached to the mitochondrial inner membrane and translation products are cotranslationally integrated into the membrane. This is Large ribosomal subunit protein mL49 (img2) from Schizosaccharomyces pombe (strain 972 / ATCC 24843) (Fission yeast).